The sequence spans 35 residues: PTEN upstream open reading frame MP31 (35 aa).

In terms of assembly, interacts with lactate dehydrogenases LDHA and LDHB; interaction with mitochondrial LDH leads to inhibition of lactate dehydrogenase activity, preventing conversion of lactate to pyruvate. As to expression, detected in brain, kidney and liver (at protein level).

The protein resides in the mitochondrion. In terms of biological role, inhibits lactate dehydrogenase (LDH)-mediated conversion of lactate to pyruvate in mitochondria by competing with mitochondrial LDH for binding to NAD(+). Also inhibits cellular lactate utilization. The polypeptide is PTEN upstream open reading frame MP31 (Mus musculus (Mouse)).